A 258-amino-acid polypeptide reads, in one-letter code: Tryptophan synthase alpha chain (258 aa).

Residues E46 and D57 each act as proton acceptor in the active site.

This sequence belongs to the TrpA family. As to quaternary structure, tetramer of two alpha and two beta chains.

It carries out the reaction (1S,2R)-1-C-(indol-3-yl)glycerol 3-phosphate + L-serine = D-glyceraldehyde 3-phosphate + L-tryptophan + H2O. It functions in the pathway amino-acid biosynthesis; L-tryptophan biosynthesis; L-tryptophan from chorismate: step 5/5. In terms of biological role, the alpha subunit is responsible for the aldol cleavage of indoleglycerol phosphate to indole and glyceraldehyde 3-phosphate. This Phocaeicola vulgatus (strain ATCC 8482 / DSM 1447 / JCM 5826 / CCUG 4940 / NBRC 14291 / NCTC 11154) (Bacteroides vulgatus) protein is Tryptophan synthase alpha chain.